The following is a 1228-amino-acid chain: Serine/threonine-protein kinase CST20 (1228 aa).

A compositionally biased stretch (polar residues) spans 1–18; sequence MSILSENNPTQTSITDPN. Disordered regions lie at residues 1–382 and 405–468; these read MSIL…TAHN and NSTN…HSQE. Composition is skewed to low complexity over residues 57-70 and 95-123; these read NTTSANTSSLSLGS and ESGSSDIDDSQQSHNNNNNNNNNESNPES. A compositionally biased stretch (basic and acidic residues) spans 148–159; that stretch reads HQGDDSDNEKQY. 3 stretches are compositionally biased toward polar residues: residues 173-195, 205-222, and 232-244; these read DSYSPGTLESPGTLNALETNNVS, TSSLEDLSLSLQHQNENA, and PQVSTSKTSSFHD. The span at 246–255 shows a compositional bias: low complexity; sequence SSVISSSTSV. 2 stretches are compositionally biased toward polar residues: residues 260–275 and 309–328; these read SNPTSTRGSHLSSYKS and DTLSSATNSPNLLRNDTLQG. Residues 347 to 367 show a composition bias toward low complexity; that stretch reads NTSATSRNTSGTSTSTVVKNS. Over residues 368 to 382 the composition is skewed to polar residues; sequence RSGTSKLTSTSTAHN. The segment covering 437–466 has biased composition (low complexity); sequence KVRGVFSSMFGKNKSTSSSSSSNSGSNSHS. The CRIB domain maps to 473 to 486; the sequence is ISTPFNAKHLAHVG. 2 disordered regions span residues 543-829 and 865-917; these read FHFD…ALAD and LREK…KQAA. Positions 548–559 are enriched in polar residues; it reads NKSSSSGWSNEN. Gly residues predominate over residues 568 to 579; sequence SNSGSGGGGGGA. A compositionally biased stretch (polar residues) spans 602-611; sequence ITPSQSMPTK. The span at 612-626 shows a compositional bias: basic and acidic residues; the sequence is TESKQSENQHPHEDN. A compositionally biased stretch (polar residues) spans 627–640; it reads ATQYTPRTPTSHVQ. Composition is skewed to low complexity over residues 668 to 681, 693 to 708, and 734 to 747; these read PSSQSLPRSDSQSD, ISPSKIKIRSISSKSL, and SIPKSKSHSASLSS. Residues 748-759 are compositionally biased toward polar residues; it reads QLRPATNGSTTA. The span at 787–805 shows a compositional bias: pro residues; it reads APPPPPSASPAPPVPPAPP. A compositionally biased stretch (polar residues) spans 809–824; the sequence is LSEQTSEIPQQRTAPS. The segment covering 865–874 has biased composition (basic and acidic residues); the sequence is LREKNERQNR. The span at 875 to 890 shows a compositional bias: polar residues; the sequence is QQETGQNNADTASGGS. One can recognise a Protein kinase domain in the interval 951-1203; that stretch reads YVDLVKIGQG…ADELLHDNFI (253 aa). ATP is bound by residues 957–965 and Lys981; that span reads IGQGASGGV. Residue Asp1071 is the Proton acceptor of the active site.

The protein belongs to the protein kinase superfamily. STE Ser/Thr protein kinase family. STE20 subfamily.

It is found in the cytoplasm. The protein localises to the nucleus. The enzyme catalyses L-seryl-[protein] + ATP = O-phospho-L-seryl-[protein] + ADP + H(+). The catalysed reaction is L-threonyl-[protein] + ATP = O-phospho-L-threonyl-[protein] + ADP + H(+). In terms of biological role, MAP4K component of the MAPK pathway required for the mating pheromone response, and the regulation of cell polarity and cell cycle. Phosphorylates histone H2B to form H2BS10ph. Required for hyphal formation and virulence. The chain is Serine/threonine-protein kinase CST20 (CST20) from Candida albicans (strain SC5314 / ATCC MYA-2876) (Yeast).